The following is an 835-amino-acid chain: Serine/threonine-protein kinase TNNI3K (835 aa).

Residue glycine 2 is the site of N-myristoyl glycine attachment. Residues 21-50 (SESYAIIIERLEDNLQIKENEFQELRHIFG) are a coiled coil. 10 ANK repeats span residues 66-96 (RGLS…RPSR), 100-129 (NGFP…DVQQ), 133-162 (GGLT…NVNV), 166-195 (VFFT…DVNV), 199-228 (VGDR…KADV), 234-263 (EDHV…EVQP), 269-298 (YGDT…TESL), 304-335 (FSET…NINH), 339-368 (DGHT…DMNL), and 381-410 (DEQT…PQEE). The Protein kinase domain maps to 463-723 (IEFHEIIGSG…EVVSKLEECL (261 aa)). Residues 469 to 477 (IGSGSFGKV) and lysine 490 each bind ATP. Aspartate 588 acts as the Proton acceptor in catalysis.

Belongs to the protein kinase superfamily. TKL Ser/Thr protein kinase family. MAP kinase kinase kinase subfamily. In terms of assembly, interacts with TNNI3, ACTC, ACTA1, MYBPC3, AIP, FABP3 and HADHB. It depends on Mg(2+) as a cofactor. In terms of processing, autophosphorylated.

Its subcellular location is the nucleus. The protein localises to the cytoplasm. The enzyme catalyses L-seryl-[protein] + ATP = O-phospho-L-seryl-[protein] + ADP + H(+). It catalyses the reaction L-threonyl-[protein] + ATP = O-phospho-L-threonyl-[protein] + ADP + H(+). In terms of biological role, may play a role in cardiac physiology. The protein is Serine/threonine-protein kinase TNNI3K of Rattus norvegicus (Rat).